The chain runs to 175 residues: Co-chaperone protein HscB homolog (175 aa).

A J domain is found at 7 to 79 (SHFDLFDLPA…LKRATYLLHL (73 aa)).

Belongs to the HscB family. Interacts with HscA and stimulates its ATPase activity.

Co-chaperone involved in the maturation of iron-sulfur cluster-containing proteins. Seems to help targeting proteins to be folded toward HscA. In Paraburkholderia phytofirmans (strain DSM 17436 / LMG 22146 / PsJN) (Burkholderia phytofirmans), this protein is Co-chaperone protein HscB homolog.